We begin with the raw amino-acid sequence, 148 residues long: uncharacterized protein (148 aa).

2 consecutive CBS domains span residues 8-68 and 74-130; these read MTAD…PNSQ and MTEK…ERAG. The segment at 127–148 is disordered; the sequence is ERAGSALSDISEGDNREEGFFH. Positions 139–148 are enriched in basic and acidic residues; that stretch reads GDNREEGFFH.

This is an uncharacterized protein from Bacillus subtilis (strain 168).